A 235-amino-acid polypeptide reads, in one-letter code: Thymidylate kinase (235 aa).

10–17 (GINGVEKS) serves as a coordination point for ATP.

The protein belongs to the thymidylate kinase family.

It carries out the reaction dTMP + ATP = dTDP + ADP. It functions in the pathway pyrimidine metabolism; dTTP biosynthesis. Functionally, catalyzes the conversion of dTMP to dTDP. The sequence is that of Thymidylate kinase (TMK) from African swine fever virus (isolate Pig/Kenya/KEN-50/1950) (ASFV).